A 393-amino-acid polypeptide reads, in one-letter code: Formate-dependent phosphoribosylglycinamide formyltransferase (393 aa).

N(1)-(5-phospho-beta-D-ribosyl)glycinamide-binding positions include 22 to 23 and E82; that span reads EL. ATP-binding positions include R114, K155, 160–165, 195–198, and E203; these read SSGKGQ and EGFI. The 190-residue stretch at 119–308 folds into the ATP-grasp domain; sequence RLAAEELGLP…EFALHARAIL (190 aa). Mg(2+) contacts are provided by E267 and E279. N(1)-(5-phospho-beta-D-ribosyl)glycinamide-binding positions include D286, K356, and 363-364; that span reads RR.

The protein belongs to the PurK/PurT family. As to quaternary structure, homodimer.

The catalysed reaction is N(1)-(5-phospho-beta-D-ribosyl)glycinamide + formate + ATP = N(2)-formyl-N(1)-(5-phospho-beta-D-ribosyl)glycinamide + ADP + phosphate + H(+). The protein operates within purine metabolism; IMP biosynthesis via de novo pathway; N(2)-formyl-N(1)-(5-phospho-D-ribosyl)glycinamide from N(1)-(5-phospho-D-ribosyl)glycinamide (formate route): step 1/1. Its function is as follows. Involved in the de novo purine biosynthesis. Catalyzes the transfer of formate to 5-phospho-ribosyl-glycinamide (GAR), producing 5-phospho-ribosyl-N-formylglycinamide (FGAR). Formate is provided by PurU via hydrolysis of 10-formyl-tetrahydrofolate. In Pseudomonas aeruginosa (strain LESB58), this protein is Formate-dependent phosphoribosylglycinamide formyltransferase.